Consider the following 997-residue polypeptide: MKDSGDSKDQQLMVALRVRPISVAELEEGATLIAHKMDEQMVVLMDPMEDPDDILRAHRSREKSYLFDVAFDFTATQEMVYQATTKSLIEGVISGYNATVFAYGPTGCGKTYTMLGTDHEPGIYVRTLNDLFRAIEETSNDMEYEVSMSYLEIYNEMIRDLLNPALGYLELREDSKGVIQVAGITEVSTINAKEIMQLLMKGNRQRTQEPTAANQTSSRSHAVLQVAVRQRSRVKNILQEVRQGRLFMIDLAGSERASQTQNRGQRMKEGAHINRSLLALGNCINALSDKGSNKYINYRDSKLTRLLKDSLGGNSRTVMIAHISPASTAFEESRNTLTYAGRAKNIRTRVKQNLLNVSYHIAQYTSIIADLRGEIQRLKCKIDQQAGRGQARGKLDRGDIRHIQAEVQLHSGQEGPAEMGQLREQLISAFHEQMDVRRRLLELENQAMEVQIDTSRHLLTIAGWEHEKSRRALKWREERRKESYTKEDSEKDSDTGDEPDNLEPPEVASARENIAALVGEQKKLRKEKLALEQRCRELRARGRRLEETLPRRIGSEEQREVLSLLCRVHELEVENTEMQSHALLRDSALRHRREAVRRLEQHRSLCDEIIQGQRQIIDDYNLEVPRHLEELYEVYLRELEEGSLERATIMDRVASRALQDSSLPKITPAGATLTPDSDLESVKTLSSEAQRPQNNTLPPLGTDSESYHVFKASPRAWQVKSSSVPTPPPIQVGSLVTQEAPPQDSLGSQINSSPESSENLSEILLSHKERKEILTRTKCISVKAAQRRSRALGTEGRHLLAPATERSSLSLHSLSEADDARPPGQLACKRPPSPTLQHAISEDNLSSSTGEGPSRAVGPRGDGTGSWVRGQKKCLSKKREESLEAKRRKRRSRSFEVTGQGLSRPKTHLLGPRPSEGLSDRRMPACGRPSPGVRHLGKVSLPLAKVKFPPNQNTGSGNPSPLLVAPNQAGVSRRATRGPSLPHGSSTFGKDGRLQHN.

One can recognise a Kinesin motor domain in the interval 11 to 346 (QLMVALRVRP…LTYAGRAKNI (336 aa)). 104 to 111 (GPTGCGKT) contacts ATP. A coiled-coil region spans residues 361 to 388 (IAQYTSIIADLRGEIQRLKCKIDQQAGR). Residues 477-494 (EERRKESYTKEDSEKDSD) are compositionally biased toward basic and acidic residues. Disordered regions lie at residues 477-509 (EERR…EVAS), 665-704 (KITP…GTDS), 718-759 (QVKS…SSEN), and 784-997 (AAQR…LQHN). The stretch at 506 to 551 (EVASARENIAALVGEQKKLRKEKLALEQRCRELRARGRRLEETLPR) forms a coiled coil. The span at 683–697 (KTLSSEAQRPQNNTL) shows a compositional bias: polar residues. Low complexity predominate over residues 750-759 (INSSPESSEN). Polar residues-rich tracts occupy residues 835-851 (TLQH…STGE) and 950-959 (PNQNTGSGNP).

Belongs to the TRAFAC class myosin-kinesin ATPase superfamily. Kinesin family. Strongly expressed in the oviduct and trachea. Expressed in testis, lung, ovary and brain.

It localises to the cytoplasm. Its subcellular location is the cytoskeleton. It is found in the cell projection. The protein localises to the cilium. In terms of biological role, plus end-directed microtubule-dependent motor protein that regulates the length of motile cilia by mediating depolymerization of microtubules at ciliary tips. In Mus musculus (Mouse), this protein is Kinesin-like protein KIF19 (Kif19).